The chain runs to 46 residues: Large ribosomal subunit protein bL34 (46 aa).

A compositionally biased stretch (basic residues) spans M1 to S17. A disordered region spans residues M1–P26.

It belongs to the bacterial ribosomal protein bL34 family.

This Pseudanabaena sp. (strain PCC 6903) protein is Large ribosomal subunit protein bL34 (rpmH).